The sequence spans 665 residues: Dystrophia myotonica WD repeat-containing protein (665 aa).

Residues methionine 1–glycine 11 are compositionally biased toward gly residues. 2 disordered regions span residues methionine 1 to proline 91 and leucine 100 to glycine 119. Position 2 is an N-acetylalanine (alanine 2). Residues proline 52–proline 64 are compositionally biased toward pro residues. Residues alanine 65–alanine 76 show a composition bias toward low complexity. A compositionally biased stretch (pro residues) spans serine 77–alanine 89. WD repeat units follow at residues isoleucine 208–proline 248, valine 279–leucine 318, serine 321–arginine 360, and glycine 363–histidine 445. 4 disordered regions span residues alanine 380–leucine 413, proline 446–proline 506, arginine 524–leucine 564, and aspartate 628–valine 665. The span at arginine 450–proline 491 shows a compositional bias: low complexity. At serine 487 the chain carries Phosphoserine. Residue arginine 543 is modified to Omega-N-methylarginine. Residues isoleucine 592–glutamate 629 form a WD 5 repeat. The span at glutamine 634–lysine 646 shows a compositional bias: polar residues. Low complexity predominate over residues serine 653–valine 665.

Component of the USP12/DMWD/WDR48 deubiquitinating complex. Interacts with USP12; promotes its enzymatic activity. Interacts with USP46. In terms of tissue distribution, widely expressed in brain where it localizes to the olfactory bulb, forebrain, thalamus, hippocampus, cerebellum, cortex and hypothalamus (at protein level). Expression seems to be particularly strong in areas of high synaptic density such as the glomerular layer of the olfactory bulb, and mossy fiber terminal fields of the hippocampus (at protein level). Expressed in retina, with strongest expression in the external and internal plexiform layers (at protein level). Strongly expressed in brain and testis. Also detected at lower levels in heart, kidney, liver, lung, ovary, uterus, bladder and skeletal muscle. In testis, expression seems to be restricted to secondary spermatocytes.

Its subcellular location is the cytoplasm. The protein resides in the nucleus. It is found in the perikaryon. It localises to the cell projection. The protein localises to the dendrite. Regulator of the deubiquitinating USP12/DMWD/WDR48 complex. Functions as a cofactor that promotes USP12 enzymatic activity. In Mus musculus (Mouse), this protein is Dystrophia myotonica WD repeat-containing protein (Dmwd).